A 145-amino-acid polypeptide reads, in one-letter code: Hemoglobin subunit beta (145 aa).

The Globin domain occupies 1–145; that stretch reads MLTAEEKAAV…VANALAHRYH (145 aa). A Phosphothreonine modification is found at threonine 11. Lysine 58 is modified (N6-acetyllysine). Histidine 62 is a heme b binding site. N6-acetyllysine is present on lysine 81. Histidine 91 lines the heme b pocket. Cysteine 92 is subject to S-nitrosocysteine.

It belongs to the globin family. As to quaternary structure, heterotetramer of two alpha chains and two beta chains. Red blood cells.

Involved in oxygen transport from the lung to the various peripheral tissues. This Alces alces alces (European moose) protein is Hemoglobin subunit beta (HBB).